Consider the following 688-residue polypeptide: Glycine--tRNA ligase beta subunit (688 aa).

The protein belongs to the class-II aminoacyl-tRNA synthetase family. Tetramer of two alpha and two beta subunits.

It is found in the cytoplasm. The enzyme catalyses tRNA(Gly) + glycine + ATP = glycyl-tRNA(Gly) + AMP + diphosphate. This is Glycine--tRNA ligase beta subunit from Aliivibrio fischeri (strain MJ11) (Vibrio fischeri).